Reading from the N-terminus, the 157-residue chain is Protein Smg homolog (157 aa).

The protein belongs to the Smg family.

This Xanthomonas euvesicatoria pv. vesicatoria (strain 85-10) (Xanthomonas campestris pv. vesicatoria) protein is Protein Smg homolog.